Consider the following 640-residue polypeptide: MDSSAVTVKGLSLIDFCSTSSFKYRGHHELSESCSLNKKEEEPMLTCEHPETPSLGSPNSAVSPSQIMKSVSLRKEKDKSPELCETPKLRRKKCTLRRRLDFSFPLLKGDSDSQSRSLESNISQGVSLEKHLPGSTSGFPKEDNFSPLVTSTIKTEDVVSNSQNSRLHFSQHKTSTIEDSKDNCGLFEVECLSPIEGNDFKDSITHFSDSSLSVSDENTCPELLGSCGSQTTYGADVTTSVTPVSSLIAKIKFNGNQTLDSSGEVRDSLFTPEDSGFCSLSWDKSEDFLSDQEGSFQELLQKHRVTPKVGDQVKKPKHFGRLRRLSTLQEQGQSEDEMQTVHPNSDSGVLESLQGSEEKRGNLALSFKDLSNTPALQLVQELFMKSKRKRSQQEDDQEFFEDRDEGKIARLQRVLAGLIGKKMGIEQLDILTELQYRNLKHILAMVLESLTSESLYSAWNVSRNWREIVAQDKKANRRRKLYIIQLRASAQGAAVLRVQDAATRLCLLSRLALRSVQAQAQAPSGEQVPTLSPWGDVLTPVASSSLTHLRSKQEQYVKVARTLFTDEALKPCPRCQSPAKYQPHKKRGLCSRLACGFDFCVLCLCAYHGSEDCRRGSAKARGSKDVLPGSAQSKRNLKRL.

A Phosphothreonine modification is found at T176. At S275 the chain carries Phosphoserine. The tract at residues 328–354 is disordered; the sequence is LQEQGQSEDEMQTVHPNSDSGVLESLQ. An F-box domain is found at 423–480; that stretch reads MGIEQLDILTELQYRNLKHILAMVLESLTSESLYSAWNVSRNWREIVAQDKKANRRRK. The ZBR-type zinc-finger motif lies at 568–616; the sequence is ALKPCPRCQSPAKYQPHKKRGLCSRLACGFDFCVLCLCAYHGSEDCRRG. Zn(2+) contacts are provided by C572, C575, C590, C595, C600, C603, H608, and C613. The tract at residues 615-640 is disordered; sequence RGSAKARGSKDVLPGSAQSKRNLKRL.

Part of a SCF (SKP1-cullin-F-box) protein ligase complex. Interaction with SKP1 does not occur. Interacts with ANAPC2; the interaction is direct, ANAPC4, CDC16, CDC23; the interaction is direct, ANAPC10; the interaction is direct and CDC26, during spermatogenesis. Interacts with CDC20. Post-translationally, phosphorylated on Thr-176 and Ser-275 in response to calcium, which is a prerequisite for ubiquitination and proteasomal degradation. In terms of processing, ubiquitinated in response to calcium, which promotes proteasomal degradation. In terms of tissue distribution, present in testis and ovary (at protein level). Expression is high in immature oocytes, and diminishes after oocyte activation. Expressed post-meiotically in spermatids and sperm.

The protein operates within protein modification; protein ubiquitination. Functionally, required to establish and maintain the arrest of oocytes at the second meiotic metaphase until fertilization. Acts by inhibiting the anaphase-promoting complex/cyclosome (APC/C) ubiquitin ligase. Probably recognizes and binds to some phosphorylated proteins and promotes their ubiquitination and degradation. Plays a vital role in modulating the ubiquitilation of CCNB1 and CDK1 during gametogenesis. This Mus musculus (Mouse) protein is F-box only protein 43 (Fbxo43).